We begin with the raw amino-acid sequence, 397 residues long: Tryptophan synthase beta chain (397 aa).

N6-(pyridoxal phosphate)lysine is present on Lys91.

It belongs to the TrpB family. As to quaternary structure, tetramer of two alpha and two beta chains. It depends on pyridoxal 5'-phosphate as a cofactor.

The catalysed reaction is (1S,2R)-1-C-(indol-3-yl)glycerol 3-phosphate + L-serine = D-glyceraldehyde 3-phosphate + L-tryptophan + H2O. The protein operates within amino-acid biosynthesis; L-tryptophan biosynthesis; L-tryptophan from chorismate: step 5/5. The beta subunit is responsible for the synthesis of L-tryptophan from indole and L-serine. This is Tryptophan synthase beta chain from Bacillus thuringiensis (strain Al Hakam).